The primary structure comprises 35 residues: Conotoxin Ca15a (35 aa).

Proline 8 bears the 4-hydroxyproline mark.

Post-translationally, contains 4 disulfide bonds. In terms of tissue distribution, expressed by the venom duct.

It is found in the secreted. In Conus caracteristicus (Characteristic cone), this protein is Conotoxin Ca15a.